The sequence spans 544 residues: Chaperonin GroEL (544 aa).

ATP-binding positions include 30-33 (TLGP), K51, 87-91 (DGTTT), G415, 479-481 (NAA), and D495. Low complexity predominate over residues 525–537 (PQDTPATAAAPDM). The disordered stretch occupies residues 525–544 (PQDTPATAAAPDMGGMGGMM).

This sequence belongs to the chaperonin (HSP60) family. In terms of assembly, forms a cylinder of 14 subunits composed of two heptameric rings stacked back-to-back. Interacts with the co-chaperonin GroES.

Its subcellular location is the cytoplasm. It carries out the reaction ATP + H2O + a folded polypeptide = ADP + phosphate + an unfolded polypeptide.. Together with its co-chaperonin GroES, plays an essential role in assisting protein folding. The GroEL-GroES system forms a nano-cage that allows encapsulation of the non-native substrate proteins and provides a physical environment optimized to promote and accelerate protein folding. This Ruthia magnifica subsp. Calyptogena magnifica protein is Chaperonin GroEL.